We begin with the raw amino-acid sequence, 270 residues long: MKVAIVTKINCKSCINIARIIISALPSDWDIIYEKSLARAIKKPGLEINEINADIIIVIGGDGTILRTAQFAHGNILGINVGGLGFLSEIEIGNIEASILKLIRNEYTIIEYMGLDVYVNGVYSGKAINDAVIHTDKVSKIRKFRLYENNYFIETTSADGVIVATPIGSTSYSFSAGGPILMPNLNGIVVSYIAPVGFRSRSIVFSEKTDLKIAIVGERSLLTIDGQIEKKLSKNDVVNIRVSENGARFISMYTNFYEKLREKLIKDVVN.

The active-site Proton acceptor is the Asp62. NAD(+)-binding positions include 62–63 (DG), Arg67, 129–130 (ND), Lys140, Asp159, Ile167, 170–175 (TSYSFS), Ala194, and Gln227.

The protein belongs to the NAD kinase family. It depends on a divalent metal cation as a cofactor.

The protein resides in the cytoplasm. It catalyses the reaction NAD(+) + ATP = ADP + NADP(+) + H(+). Its function is as follows. Involved in the regulation of the intracellular balance of NAD and NADP, and is a key enzyme in the biosynthesis of NADP. Catalyzes specifically the phosphorylation on 2'-hydroxyl of the adenosine moiety of NAD to yield NADP. This is NAD kinase from Picrophilus torridus (strain ATCC 700027 / DSM 9790 / JCM 10055 / NBRC 100828 / KAW 2/3).